A 250-amino-acid polypeptide reads, in one-letter code: Putative inner dynein arm light chain, axonemal (250 aa).

Positions methionine 168 to lysine 250 form a coiled coil.

Belongs to the inner dynein arm light chain family.

The protein resides in the cell projection. It is found in the cilium. Its subcellular location is the dynein axonemal particle. May play a dynamic role in flagellar motility. This Drosophila melanogaster (Fruit fly) protein is Putative inner dynein arm light chain, axonemal.